We begin with the raw amino-acid sequence, 87 residues long: MAHKKGVGSSRNGRDSNPKYLGVKIFGGQAIEAGNIIVRQRGTQFHPGSGVGLGRDHTLFALVDGKVEFSVKGAKKRRTVSVVSVEA.

It belongs to the bacterial ribosomal protein bL27 family.

The protein is Large ribosomal subunit protein bL27 of Stenotrophomonas maltophilia (strain R551-3).